A 376-amino-acid chain; its full sequence is Endo-1,4-beta-xylanase A (376 aa).

Residues 1-18 (MHLASSLFLLATLPFGFA) form the signal peptide. One can recognise a GH10 domain in the interval 55–355 (QRERAGLEDK…HPAYYGVVEA (301 aa)). The N-linked (GlcNAc...) asparagine glycan is linked to Asn-100. Catalysis depends on Glu-170, which acts as the Proton donor. Glu-277 (nucleophile) is an active-site residue. Asn-358 carries N-linked (GlcNAc...) asparagine glycosylation.

It belongs to the glycosyl hydrolase 10 (cellulase F) family.

It localises to the secreted. The enzyme catalyses Endohydrolysis of (1-&gt;4)-beta-D-xylosidic linkages in xylans.. The protein operates within glycan degradation; xylan degradation. Its activity is regulated as follows. Partial inhibition of activity is detected in the presence of Ag(+), Cu2(+) and SDS. Like most fungal xylanases, activity is completely inhibited by Hg(2+) since Hg(2+) could interact with tryptophan residues and oxidize the indole ring. Beta-mercaptoethanol enhances the enzymatic activity by counteracting the oxidation effects of the S-S linkage between cysteine residues. Its function is as follows. Endo-1,4-beta-xylanase involved in the hydrolysis of xylan, a major structural heterogeneous polysaccharide found in plant biomass representing the second most abundant polysaccharide in the biosphere, after cellulose. Is most active on birchwood xylan (defined as 100%), moderate on beechwood xylan (96.8%) and soluble wheat arabinoxylan (84.5%), and weak on insoluble wheat arabinoxylan (19.7%). Hydrolyzes substrates into a mixture of xylobiose and xylotriose, but no xylose. No activity was detected in the presence of barley beta-glucan, carboxymethyl cellulose-sodium (CMC-Na), and Avicel. Acts as an alkali-tolerant xylanase, exhibiting 68.8% of the activity at pH 9.0, and even 31.8% at pH 10.0. In Humicola insolens (Soft-rot fungus), this protein is Endo-1,4-beta-xylanase A.